A 155-amino-acid polypeptide reads, in one-letter code: MKIQLIAVGTKMPDWVKVGFEEYQRRFPKDMPFELIEIPAGKRGKNADIKRILEQEGKAMLSACGRGKVVTLDIPGKPWTTDQLARQLESWKNDGRDICLLIGGPEGLSPECKAAAEQSWSLSPLTLPHPLVRVVVAESVYRAWSLTTNHPYHRE.

S-adenosyl-L-methionine contacts are provided by residues Leu72, Gly103, and 122–127 (LSPLTL).

The protein belongs to the RNA methyltransferase RlmH family. Homodimer.

Its subcellular location is the cytoplasm. It carries out the reaction pseudouridine(1915) in 23S rRNA + S-adenosyl-L-methionine = N(3)-methylpseudouridine(1915) in 23S rRNA + S-adenosyl-L-homocysteine + H(+). Specifically methylates the pseudouridine at position 1915 (m3Psi1915) in 23S rRNA. The sequence is that of Ribosomal RNA large subunit methyltransferase H from Mannheimia succiniciproducens (strain KCTC 0769BP / MBEL55E).